The following is a 291-amino-acid chain: N-acetylmannosamine kinase (291 aa).

ATP contacts are provided by residues 5–12 (AIDIGGTK) and 132–139 (GVGGGVVS). Residues histidine 156, cysteine 166, cysteine 168, and cysteine 173 each coordinate Zn(2+).

The protein belongs to the ROK (NagC/XylR) family. NanK subfamily. Homodimer.

The enzyme catalyses an N-acyl-D-mannosamine + ATP = an N-acyl-D-mannosamine 6-phosphate + ADP + H(+). It functions in the pathway amino-sugar metabolism; N-acetylneuraminate degradation; D-fructose 6-phosphate from N-acetylneuraminate: step 2/5. Its function is as follows. Catalyzes the phosphorylation of N-acetylmannosamine (ManNAc) to ManNAc-6-P. This Escherichia coli (strain SE11) protein is N-acetylmannosamine kinase.